The sequence spans 220 residues: Heptaprenyl diphosphate synthase component 1 (220 aa).

As to quaternary structure, heterodimer of component I and II.

The catalysed reaction is 4 isopentenyl diphosphate + (2E,6E)-farnesyl diphosphate = all-trans-heptaprenyl diphosphate + 4 diphosphate. Its function is as follows. Supplies heptaprenyl diphosphate, the precursor for the side chain of the isoprenoid quinone menaquinone-7 (MQ-7). The sequence is that of Heptaprenyl diphosphate synthase component 1 (hepS) from Geobacillus stearothermophilus (Bacillus stearothermophilus).